The primary structure comprises 91 residues: CRISPR-associated endoribonuclease Cas2 2 (91 aa).

Asp8 is a binding site for Mg(2+).

Belongs to the CRISPR-associated endoribonuclease Cas2 protein family. In terms of assembly, homodimer, forms a heterotetramer with a Cas1 homodimer. The cofactor is Mg(2+).

In terms of biological role, CRISPR (clustered regularly interspaced short palindromic repeat), is an adaptive immune system that provides protection against mobile genetic elements (viruses, transposable elements and conjugative plasmids). CRISPR clusters contain sequences complementary to antecedent mobile elements and target invading nucleic acids. CRISPR clusters are transcribed and processed into CRISPR RNA (crRNA). Functions as a ssRNA-specific endoribonuclease. Involved in the integration of spacer DNA into the CRISPR cassette. The polypeptide is CRISPR-associated endoribonuclease Cas2 2 (Pyrobaculum aerophilum (strain ATCC 51768 / DSM 7523 / JCM 9630 / CIP 104966 / NBRC 100827 / IM2)).